We begin with the raw amino-acid sequence, 459 residues long: ATP synthase subunit beta 1 (459 aa).

An ATP-binding site is contributed by Gly148 to Thr155.

The protein belongs to the ATPase alpha/beta chains family. In terms of assembly, F-type ATPases have 2 components, CF(1) - the catalytic core - and CF(0) - the membrane proton channel. CF(1) has five subunits: alpha(3), beta(3), gamma(1), delta(1), epsilon(1). CF(0) has three main subunits: a(1), b(2) and c(9-12). The alpha and beta chains form an alternating ring which encloses part of the gamma chain. CF(1) is attached to CF(0) by a central stalk formed by the gamma and epsilon chains, while a peripheral stalk is formed by the delta and b chains.

The protein localises to the cell inner membrane. It carries out the reaction ATP + H2O + 4 H(+)(in) = ADP + phosphate + 5 H(+)(out). Produces ATP from ADP in the presence of a proton gradient across the membrane. The catalytic sites are hosted primarily by the beta subunits. This is ATP synthase subunit beta 1 from Nitrosospira multiformis (strain ATCC 25196 / NCIMB 11849 / C 71).